A 235-amino-acid polypeptide reads, in one-letter code: tRNA (guanine-N(1)-)-methyltransferase (235 aa).

S-adenosyl-L-methionine-binding positions include glycine 113 and 133-138 (IGDYIL).

Belongs to the RNA methyltransferase TrmD family. In terms of assembly, homodimer.

The protein resides in the cytoplasm. It catalyses the reaction guanosine(37) in tRNA + S-adenosyl-L-methionine = N(1)-methylguanosine(37) in tRNA + S-adenosyl-L-homocysteine + H(+). Functionally, specifically methylates guanosine-37 in various tRNAs. This is tRNA (guanine-N(1)-)-methyltransferase from Wolbachia sp. subsp. Brugia malayi (strain TRS).